The primary structure comprises 311 residues: tRNA-cytidine(32) 2-sulfurtransferase (311 aa).

The PP-loop motif signature appears at 47–52 (SGGKDS). [4Fe-4S] cluster is bound by residues Cys122, Cys125, and Cys213.

The protein belongs to the TtcA family. In terms of assembly, homodimer. Requires Mg(2+) as cofactor. [4Fe-4S] cluster is required as a cofactor.

The protein resides in the cytoplasm. It carries out the reaction cytidine(32) in tRNA + S-sulfanyl-L-cysteinyl-[cysteine desulfurase] + AH2 + ATP = 2-thiocytidine(32) in tRNA + L-cysteinyl-[cysteine desulfurase] + A + AMP + diphosphate + H(+). It participates in tRNA modification. Its function is as follows. Catalyzes the ATP-dependent 2-thiolation of cytidine in position 32 of tRNA, to form 2-thiocytidine (s(2)C32). The sulfur atoms are provided by the cysteine/cysteine desulfurase (IscS) system. This is tRNA-cytidine(32) 2-sulfurtransferase from Salmonella heidelberg (strain SL476).